Consider the following 366-residue polypeptide: Polyprenyl transferase AOL_s00215g276 (366 aa).

Residues 1-22 (MESIIARPRTRSSAKEKTQTMS) are disordered. 7 consecutive transmembrane segments (helical) span residues 53–73 (LHTL…CLSA), 85–105 (FLSV…AFCT), 137–157 (IIAF…TLGF), 160–180 (ALVC…KRVV), 185–205 (LVLG…VAGN), 212–232 (AVPM…IYAT), and 253–273 (HMHQ…SFTA). Residue Asn277 is glycosylated (N-linked (GlcNAc...) asparagine). Transmembrane regions (helical) follow at residues 281-301 (LFWS…LLSL) and 312-332 (VFLM…IELW). Asn352 carries an N-linked (GlcNAc...) asparagine glycan.

Belongs to the UbiA prenyltransferase family. Mg(2+) serves as cofactor.

The protein resides in the membrane. It participates in secondary metabolite biosynthesis; terpenoid biosynthesis. In terms of biological role, polyprenyl transferase; part of the gene cluster that mediates the biosynthesis of sesquiterpenyl epoxy-cyclohexenoids (SECs) such as anthrobotrisins and arthrosporols, metabolites that possess a novel hybrid carbon skeleton consisting of a polyketide-derived epoxycyclohexenol combined with a terpenoid-derived monocyclic sesquiterpenol substructure (PKS-PTS hybrid). The SEC pathway plays an important role for fungal soil colonization via decreasing fungal nematode-capturing ability. Within the pathway, the polyprenyl transferase catalyzes the farnesylation of toluquinol to yield farnesyl hydroquinone, the first hybrid precursor for biosynthesis of SECs, and farnesyl quinone (34) might be the key precursor for the epoxy ring formation. The pathway begins with the biosynthesis of 6-methylsalicylic acid (6-MSA), the first precursor of the polyketide-derived epoxycyclohexenol in arthrosporols, by the polyketide synthase (PKS) AOL_s00215g283 via condensation of 1 acetate and 3 malonate units. The 6-methylsalicylic acid decarboxylase AOL_s00215g281 then catalyzes the decarboxylation of 6-methylsalicylic acid to yield m-cresol. The cytochrome P450 monooxygenase AOL_s00215g282 further oxidizes m-cresol to yield toluquinol. With the assistance of the oxidoreductase AOL_s00215g277, the polyprenyl transferase AOL_s00215g276 catalyzes the farnesylation of toluquinol to produce farnesyl hydroquinone, the hybrid precursor for biosynthesis of SECs. Farnesyl hydroquinone undergoes epoxidation and then subsequent dehydrogenation to form farnesyl epoxy-quinone, the first and simplest SEC. The cytochrome P450 monooxygenase AOL_s00215g278 and the FAD-dependent monooxygenase AOL_s00215g279 might be involved in the oxygenation of the phenol moiety, most likely in the epoxy formation. The cytochrome P450 monooxygenases AOL_s00215g274 and AOL_s00215g280 are involved in specific regional ketone reductions at respectively C-4 and C-1 of farnesyl epoxy-quinone PubMed:33823587. This Arthrobotrys oligospora (strain ATCC 24927 / CBS 115.81 / DSM 1491) (Nematode-trapping fungus) protein is Polyprenyl transferase AOL_s00215g276.